The chain runs to 513 residues: Protein CYCLOPS (513 aa).

Disordered regions lie at residues 329–380 and 395–435; these read QGRT…STQN and DDRK…AEAK. A compositionally biased stretch (low complexity) spans 333 to 347; the sequence is ASGEPSQSESSAAAP. Residues 359–380 are compositionally biased toward polar residues; that stretch reads PSNSNQTLGDSSWKQVGESTQN. Short sequence motifs (nuclear localization signal) lie at residues 397 to 400 and 421 to 424; these read RKRK and KKRR. Positions 447–513 form a coiled coil; sequence MQAILKRCEN…ERILSETGKI (67 aa).

It belongs to the CYCLOPS family. Forms homodimers. Interacts with CCAMK. In terms of tissue distribution, highly expressed in roots. Expressed in root hairs and nodules. Not detected in leaves or flowers.

The protein localises to the nucleus. Functionally, involved symbiotic signaling. Required for root infection by symbiotic rhizobia, infection thread (IT) formation, and nodule development. Required for proper induction of early nodulin gene expression. Probably not involved in nodule organogenesis. Involved in arbuscular mycorrhizal (AM) symbiosis. Required for fungal infection of the outer cortical cell layers, and for arbuscule development during the AM symbiosis. Acts downstream of CCAMK. Required for symbiosome formation (i.e. the release of the bacteria from the ITs) and subsequent symbiosome development. Required for the expression of the nodule-specific RPG gene, which controls proper IT growth and is essential for symbiosome formation. Acts upstream of ERN1, a transcriptional regulator required for nodulation. The protein is Protein CYCLOPS of Medicago truncatula (Barrel medic).